We begin with the raw amino-acid sequence, 95 residues long: Aspartyl/glutamyl-tRNA(Asn/Gln) amidotransferase subunit C (95 aa).

The protein belongs to the GatC family. In terms of assembly, heterotrimer of A, B and C subunits.

It catalyses the reaction L-glutamyl-tRNA(Gln) + L-glutamine + ATP + H2O = L-glutaminyl-tRNA(Gln) + L-glutamate + ADP + phosphate + H(+). The enzyme catalyses L-aspartyl-tRNA(Asn) + L-glutamine + ATP + H2O = L-asparaginyl-tRNA(Asn) + L-glutamate + ADP + phosphate + 2 H(+). Its function is as follows. Allows the formation of correctly charged Asn-tRNA(Asn) or Gln-tRNA(Gln) through the transamidation of misacylated Asp-tRNA(Asn) or Glu-tRNA(Gln) in organisms which lack either or both of asparaginyl-tRNA or glutaminyl-tRNA synthetases. The reaction takes place in the presence of glutamine and ATP through an activated phospho-Asp-tRNA(Asn) or phospho-Glu-tRNA(Gln). In Thermodesulfovibrio yellowstonii (strain ATCC 51303 / DSM 11347 / YP87), this protein is Aspartyl/glutamyl-tRNA(Asn/Gln) amidotransferase subunit C.